The chain runs to 581 residues: Intermediate filament protein ifa-2 (581 aa).

Disordered stretches follow at residues 1 to 35 (MTDP…GSGN) and 47 to 68 (SSVS…RDNR). The tract at residues 1 to 74 (MTDPDSYRSS…RDNREREKKE (74 aa)) is head. A compositionally biased stretch (polar residues) spans 7–28 (YRSSITSRPSFNRTVTSSSQNY). Positions 71-424 (EKKEIMELND…QMLEGNSEGN (354 aa)) constitute an IF rod domain. Positions 75-106 (IMELNDRLASYIEKVRFLDAQNRKLDADLKML) are coil 1A. The interval 107–120 (QGRFGKSTGSVKVM) is linker 1. Positions 121–258 (YEMEITTATN…RGFETELKEL (138 aa)) are coil 1B. Positions 259-276 (QAQAARDTTSENREYFKN) are linker 12. A coil 2 region spans residues 277 to 424 (ELANAMRDIR…QMLEGNSEGN (148 aa)). The segment at 425–578 (GLRQLVEKVV…THIQRQSQQT (154 aa)) is tail. A disordered region spans residues 449–469 (RVVKGEHSSRTSYQRSAKGNV). An LTD domain is found at 457–574 (SRTSYQRSAK…EERATHIQRQ (118 aa)).

Belongs to the intermediate filament family. In terms of assembly, forms some heteromeric filaments with ifb-1. As to expression, mainly expressed in regions of the hypodermis adjacent to muscle. Expressed in longitudinal stripes where the mechanosensory neurons interface with the hypodermis. Also expressed to the uterine seam and within the uterine-vulval cells.

The protein localises to the cell junction. Its subcellular location is the hemidesmosome. Its function is as follows. Cytoplasmic intermediate filaments provide mechanical strength to cells. Essential protein, involved in attachment structures in epidermal cells that connect muscles to the external cuticle. Probably acts by forming hypodermal hemidesmosome complexes that help mediate muscle-cuticle force transduction. Although expressed during embryogenesis, it is not required for embryonic development of muscle-cuticle linkages nor for the localization of other proteins to the hemidesmosomes in embryos. The chain is Intermediate filament protein ifa-2 from Caenorhabditis elegans.